The sequence spans 352 residues: Alanine racemase (352 aa).

The Proton acceptor; specific for D-alanine role is filled by Lys33. Position 33 is an N6-(pyridoxal phosphate)lysine (Lys33). Arg129 provides a ligand contact to substrate. Tyr250 (proton acceptor; specific for L-alanine) is an active-site residue. Substrate is bound at residue Met298.

This sequence belongs to the alanine racemase family. It depends on pyridoxal 5'-phosphate as a cofactor.

The enzyme catalyses L-alanine = D-alanine. Its pathway is amino-acid biosynthesis; D-alanine biosynthesis; D-alanine from L-alanine: step 1/1. In terms of biological role, catalyzes the interconversion of L-alanine and D-alanine. May also act on other amino acids. This chain is Alanine racemase (alr), found in Neisseria meningitidis serogroup C / serotype 2a (strain ATCC 700532 / DSM 15464 / FAM18).